The primary structure comprises 180 residues: Crossover junction endodeoxyribonuclease RuvC (180 aa).

Active-site residues include Asp7, Glu66, and Asp138. 3 residues coordinate Mg(2+): Asp7, Glu66, and Asp138.

Belongs to the RuvC family. As to quaternary structure, homodimer which binds Holliday junction (HJ) DNA. The HJ becomes 2-fold symmetrical on binding to RuvC with unstacked arms; it has a different conformation from HJ DNA in complex with RuvA. In the full resolvosome a probable DNA-RuvA(4)-RuvB(12)-RuvC(2) complex forms which resolves the HJ. Mg(2+) is required as a cofactor.

The protein localises to the cytoplasm. The catalysed reaction is Endonucleolytic cleavage at a junction such as a reciprocal single-stranded crossover between two homologous DNA duplexes (Holliday junction).. Functionally, the RuvA-RuvB-RuvC complex processes Holliday junction (HJ) DNA during genetic recombination and DNA repair. Endonuclease that resolves HJ intermediates. Cleaves cruciform DNA by making single-stranded nicks across the HJ at symmetrical positions within the homologous arms, yielding a 5'-phosphate and a 3'-hydroxyl group; requires a central core of homology in the junction. The consensus cleavage sequence is 5'-(A/T)TT(C/G)-3'. Cleavage occurs on the 3'-side of the TT dinucleotide at the point of strand exchange. HJ branch migration catalyzed by RuvA-RuvB allows RuvC to scan DNA until it finds its consensus sequence, where it cleaves and resolves the cruciform DNA. The sequence is that of Crossover junction endodeoxyribonuclease RuvC from Herminiimonas arsenicoxydans.